The following is a 129-amino-acid chain: Small ribosomal subunit protein uS11 (129 aa).

This sequence belongs to the universal ribosomal protein uS11 family. In terms of assembly, part of the 30S ribosomal subunit. Interacts with proteins S7 and S18. Binds to IF-3.

In terms of biological role, located on the platform of the 30S subunit, it bridges several disparate RNA helices of the 16S rRNA. Forms part of the Shine-Dalgarno cleft in the 70S ribosome. This chain is Small ribosomal subunit protein uS11, found in Escherichia fergusonii (strain ATCC 35469 / DSM 13698 / CCUG 18766 / IAM 14443 / JCM 21226 / LMG 7866 / NBRC 102419 / NCTC 12128 / CDC 0568-73).